The following is a 179-amino-acid chain: ATP synthase subunit delta (179 aa).

The protein belongs to the ATPase delta chain family. As to quaternary structure, F-type ATPases have 2 components, F(1) - the catalytic core - and F(0) - the membrane proton channel. F(1) has five subunits: alpha(3), beta(3), gamma(1), delta(1), epsilon(1). F(0) has three main subunits: a(1), b(2) and c(10-14). The alpha and beta chains form an alternating ring which encloses part of the gamma chain. F(1) is attached to F(0) by a central stalk formed by the gamma and epsilon chains, while a peripheral stalk is formed by the delta and b chains.

The protein localises to the cell membrane. Its function is as follows. F(1)F(0) ATP synthase produces ATP from ADP in the presence of a proton or sodium gradient. F-type ATPases consist of two structural domains, F(1) containing the extramembraneous catalytic core and F(0) containing the membrane proton channel, linked together by a central stalk and a peripheral stalk. During catalysis, ATP synthesis in the catalytic domain of F(1) is coupled via a rotary mechanism of the central stalk subunits to proton translocation. This protein is part of the stalk that links CF(0) to CF(1). It either transmits conformational changes from CF(0) to CF(1) or is implicated in proton conduction. The sequence is that of ATP synthase subunit delta from Metamycoplasma arthritidis (strain 158L3-1) (Mycoplasma arthritidis).